The sequence spans 360 residues: DNA polymerase IV (360 aa).

The 182-residue stretch at 8-189 (IIHVDMDCFF…LPLEKIPGVG (182 aa)) folds into the UmuC domain. 2 residues coordinate Mg(2+): aspartate 12 and aspartate 107. The active site involves glutamate 108.

This sequence belongs to the DNA polymerase type-Y family. As to quaternary structure, monomer. Mg(2+) is required as a cofactor.

The protein resides in the cytoplasm. It carries out the reaction DNA(n) + a 2'-deoxyribonucleoside 5'-triphosphate = DNA(n+1) + diphosphate. Poorly processive, error-prone DNA polymerase involved in untargeted mutagenesis. Copies undamaged DNA at stalled replication forks, which arise in vivo from mismatched or misaligned primer ends. These misaligned primers can be extended by PolIV. Exhibits no 3'-5' exonuclease (proofreading) activity. May be involved in translesional synthesis, in conjunction with the beta clamp from PolIII. In Vibrio cholerae serotype O1 (strain ATCC 39315 / El Tor Inaba N16961), this protein is DNA polymerase IV.